We begin with the raw amino-acid sequence, 968 residues long: Catenin delta-1 (968 aa).

The residue at position 1 (Met-1) is an N-acetylmethionine. Positions 1–357 are necessary and sufficient for interaction with CCDC85B; it reads MDDSEVESTA…ASLDSLRKGG (357 aa). The residue at position 4 (Ser-4) is a Phosphoserine. Positions 10 to 46 form a coiled coil; it reads ASILASVKEQEAQFEKLTRALEEERRHVSAQLERVRV. Ser-47 bears the Phosphoserine mark. The residue at position 59 (Thr-59) is a Phosphothreonine. A Phosphotyrosine; by FYN modification is found at Tyr-112. Ser-125 is subject to Phosphoserine. 2 positions are modified to phosphotyrosine: Tyr-217 and Tyr-221. Ser-225 carries the post-translational modification Phosphoserine. A Phosphotyrosine modification is found at Tyr-228. Ser-230 and Ser-252 each carry phosphoserine. Phosphotyrosine is present on Tyr-257. Phosphoserine occurs at positions 268 and 269. Phosphotyrosine is present on Tyr-280. Phosphoserine; by PAK5 is present on Ser-288. Residue Tyr-291 is modified to Phosphotyrosine. Residues 299-306 carry the Nuclear localization signal (NLS) motif; that stretch reads MSDYGTAR. The residue at position 300 (Ser-300) is a Phosphoserine. Phosphothreonine is present on Thr-304. A phosphoserine mark is found at Ser-320, Ser-346, Ser-349, and Ser-352. ARM repeat units lie at residues 358 to 395, 398 to 437, 441 to 475, and 476 to 516; these read PPPP…HLCY, DKVK…NISF, QDNK…ITGT, and LWNL…NEDC. Lys-421 participates in a covalent cross-link: Glycyl lysine isopeptide (Lys-Gly) (interchain with G-Cter in SUMO2). Lys-517 is covalently cross-linked (Glycyl lysine isopeptide (Lys-Gly) (interchain with G-Cter in SUMO2)). Residues 521 to 528 carry the Nuclear localization signal (NLS) motif; the sequence is IEWESVLT. 6 ARM repeats span residues 534–573, 583–624, 653–693, 700–739, 740–780, and 781–826; these read LRNV…DSDS, LRNL…AKKG, ARGY…NLCA, RYIR…NLAV, DARN…SILN, and TINE…ALVL. Ile-566, Asp-572, Ser-587, and Glu-593 each carry phosphothreonine. Positions 568 to 575 match the Nuclear localization signal (NLS) motif; sequence QKDSDSKL. Ser-617 bears the Phosphoserine mark. A Nuclear localization signal (NLS) motif is present at residues 622–629; the sequence is KKGKDEWF. Ser-713 bears the Phosphoserine mark. Phosphothreonine occurs at positions 788, 794, and 809. Ser-811 carries the post-translational modification Phosphoserine. 3 positions are modified to phosphothreonine: Ser-815, Leu-835, and Lys-841. A Phosphoserine modification is found at Ser-847. The disordered stretch occupies residues 855 to 944; sequence NASRSQSSHS…LMQDEGQESL (90 aa). At Ala-856 the chain carries Phosphothreonine. 3 positions are modified to phosphoserine: Ser-857, Ser-859, and Ser-861. Position 862 is a phosphothreonine (Ser-862). Phosphoserine is present on Ser-864. Tyr-865 is subject to Phosphotyrosine. The residue at position 868 (Ser-868) is a Phosphoserine. Thr-869 bears the Phosphothreonine mark. Residues 875-888 show a composition bias toward basic and acidic residues; sequence RNQKSDKKPDREEI. Ser-879 carries the phosphoserine modification. Residue Lys-882 forms a Glycyl lysine isopeptide (Lys-Gly) (interchain with G-Cter in SUMO2) linkage. 2 positions are modified to phosphothreonine: Gln-889 and Ser-895. Residues 889-908 are compositionally biased toward polar residues; the sequence is QMSNMGSNTKSLDNNYSTPN. Position 899 is a phosphoserine (Ser-899). Tyr-904 bears the Phosphotyrosine mark. Residues Thr-906, Arg-910, and Thr-916 each carry the phosphothreonine modification. The span at 909–922 shows a compositional bias: basic and acidic residues; it reads ERGDHNRTLDRSGD. Ser-920 and Ser-943 each carry phosphoserine.

It belongs to the beta-catenin family. In terms of assembly, belongs to a multiprotein cell-cell adhesion complex that also contains E-cadherin/CDH1, alpha-catenin/CTNNA1, beta-catenin/CTNNB1, and gamma-catenin/JUP. Component of a cadherin:catenin adhesion complex composed of at least of CDH26, beta-catenin/CTNNB1, alpha-catenin/CTNNA1 and p120 catenin/CTNND1. Binds to the C-terminal fragment of PSEN1 and mutually competes for CDH1. Interacts with ZBTB33. Interacts with GLIS2. Interacts with FER. Interacts with NANOS1 (via N-terminal region). Interacts (via N-terminus) with GNA12; the interaction regulates CDH1-mediated cell-cell adhesion. Interacts with GNA13. Interacts with CCDC85B. Interacts with PLPP3; negatively regulates the PLPP3-mediated stabilization of CTNNB1. Interacts with DSG3; the interaction facilitates DSG3 localization and retention at cell-cell junctions. Interacts with CTNND1/p120-catenin; the interaction controls CADH5 endocytosis. Post-translationally, phosphorylated by FER and other protein-tyrosine kinases. Phosphorylated at Ser-288 by PAK5. Dephosphorylated by PTPRJ. As to expression, expressed in vascular endothelium. Melanocytes and melanoma cells primarily express the long isoform 1A, whereas keratinocytes express shorter isoforms, especially 3A. The shortest isoform 4A, is detected in normal keratinocytes and melanocytes, and generally lost from cells derived from squamous cell carcinomas or melanomas. The C-terminal alternatively spliced exon B is present in the p120ctn transcripts in the colon, intestine and prostate, but lost in several tumor tissues derived from these organs.

It localises to the cell junction. The protein resides in the adherens junction. It is found in the cytoplasm. Its subcellular location is the nucleus. The protein localises to the cell membrane. Key regulator of cell-cell adhesion that associates with and regulates the cell adhesion properties of both C-, E- and N-cadherins, being critical for their surface stability. Promotes localization and retention of DSG3 at cell-cell junctions, via its interaction with DSG3. Beside cell-cell adhesion, regulates gene transcription through several transcription factors including ZBTB33/Kaiso2 and GLIS2, and the activity of Rho family GTPases and downstream cytoskeletal dynamics. Implicated both in cell transformation by SRC and in ligand-induced receptor signaling through the EGF, PDGF, CSF-1 and ERBB2 receptors. The sequence is that of Catenin delta-1 from Homo sapiens (Human).